Consider the following 142-residue polypeptide: Hemoglobin subunit pi (142 aa).

Residues 2–142 form the Globin domain; that stretch reads ALTQAEKAAV…ISSVLTEKYR (141 aa). Positions 59 and 88 each coordinate heme b.

It belongs to the globin family.

The pi' chain is the counterpart of the alpha chain in the major early embryonic hemoglobin P. The polypeptide is Hemoglobin subunit pi (Gallus gallus (Chicken)).